The sequence spans 692 residues: Elongation factor G 1 (692 aa).

The tr-type G domain occupies 8 to 283 (EKTRNIGIMA…SVVEYLPSPV (276 aa)). GTP-binding positions include 17–24 (AHIDAGKT), 81–85 (DTPGH), and 135–138 (NKMD).

The protein belongs to the TRAFAC class translation factor GTPase superfamily. Classic translation factor GTPase family. EF-G/EF-2 subfamily.

The protein localises to the cytoplasm. Catalyzes the GTP-dependent ribosomal translocation step during translation elongation. During this step, the ribosome changes from the pre-translocational (PRE) to the post-translocational (POST) state as the newly formed A-site-bound peptidyl-tRNA and P-site-bound deacylated tRNA move to the P and E sites, respectively. Catalyzes the coordinated movement of the two tRNA molecules, the mRNA and conformational changes in the ribosome. This is Elongation factor G 1 from Geobacter metallireducens (strain ATCC 53774 / DSM 7210 / GS-15).